A 133-amino-acid chain; its full sequence is Large ribosomal subunit protein eL14 (133 aa).

It belongs to the eukaryotic ribosomal protein eL14 family.

This is Large ribosomal subunit protein eL14 (RPL14) from Griffithsia japonica (Red alga).